Here is a 556-residue protein sequence, read N- to C-terminus: Arginine--tRNA ligase (556 aa).

Residues 132–142 (ANPTGDLHLGH) carry the 'HIGH' region motif.

This sequence belongs to the class-I aminoacyl-tRNA synthetase family. In terms of assembly, monomer.

It is found in the cytoplasm. It catalyses the reaction tRNA(Arg) + L-arginine + ATP = L-arginyl-tRNA(Arg) + AMP + diphosphate. This chain is Arginine--tRNA ligase, found in Bacillus velezensis (strain DSM 23117 / BGSC 10A6 / LMG 26770 / FZB42) (Bacillus amyloliquefaciens subsp. plantarum).